Reading from the N-terminus, the 85-residue chain is Large ribosomal subunit protein bL27 (85 aa).

A disordered region spans residues 1 to 20 (MAHKKAGGSTRNGRDSEAKR).

The protein belongs to the bacterial ribosomal protein bL27 family.

The sequence is that of Large ribosomal subunit protein bL27 from Escherichia coli O139:H28 (strain E24377A / ETEC).